The chain runs to 128 residues: MANVPADLKYSKEHEWIRVEGNIGIVGITWFAQDQLGDVVFVELPEVGRELKQNEQFGVVESVKTVSDLYCPASGKVVEVNTKLESSPELINQDPYGEGWILKLELSNPAELDNLLDAAAYDAFTKEG.

Residues 23–105 enclose the Lipoyl-binding domain; it reads IGIVGITWFA…YGEGWILKLE (83 aa). An N6-lipoyllysine modification is found at Lys-64.

Belongs to the GcvH family. The glycine cleavage system is composed of four proteins: P, T, L and H. Requires (R)-lipoate as cofactor.

The glycine cleavage system catalyzes the degradation of glycine. The H protein shuttles the methylamine group of glycine from the P protein to the T protein. The protein is Glycine cleavage system H protein of Symbiobacterium thermophilum (strain DSM 24528 / JCM 14929 / IAM 14863 / T).